The following is a 302-amino-acid chain: Putative gluconeogenesis factor (302 aa).

Belongs to the gluconeogenesis factor family.

The protein resides in the cytoplasm. In terms of biological role, required for morphogenesis under gluconeogenic growth conditions. The sequence is that of Putative gluconeogenesis factor (ybhK) from Salmonella typhi.